The primary structure comprises 2512 residues: Probable polyketide synthase 5 (2512 aa).

A Ketosynthase family 3 (KS3) domain is found at 17–447 (MKGVAIVGIG…GSNCCLLISE (431 aa)). Catalysis depends on for beta-ketoacyl synthase activity residues Cys187, His329, and His368. The segment at 638-671 (GVNPSFILGHSLGEIPTSYCSGMIDLDTFCYTVY) is acyl/malonyl transferase. The active-site For acyl/malonyl transferase activity is the Ser648. The N-terminal hotdog fold stretch occupies residues 928 to 1050 (IDHLGLSNSY…ANFQLLDHTI (123 aa)). In terms of domain architecture, PKS/mFAS DH spans 928-1210 (IDHLGLSNSY…SKSLIPIKEL (283 aa)). The active-site Proton acceptor; for dehydratase activity is the His962. Positions 1067-1210 (TLARLTKNEI…SKSLIPIKEL (144 aa)) are C-terminal hotdog fold. Catalysis depends on Asp1125, which acts as the Proton donor; for dehydratase activity. The 78-residue stretch at 2430-2507 (AGSKNVDELF…VSIKIILNFL (78 aa)) folds into the Carrier domain. Ser2467 bears the O-(pantetheine 4'-phosphoryl)serine mark.

It depends on pantetheine 4'-phosphate as a cofactor.

Its function is as follows. Probable polyketide synthase. The chain is Probable polyketide synthase 5 (pks5) from Dictyostelium discoideum (Social amoeba).